Here is a 363-residue protein sequence, read N- to C-terminus: Phosphoserine aminotransferase (363 aa).

Position 42 (R42) interacts with L-glutamate. Pyridoxal 5'-phosphate-binding positions include 76–77 (GR), W102, T156, D175, and Q198. Residue K199 is modified to N6-(pyridoxal phosphate)lysine. 240-241 (NT) provides a ligand contact to pyridoxal 5'-phosphate.

This sequence belongs to the class-V pyridoxal-phosphate-dependent aminotransferase family. SerC subfamily. Homodimer. The cofactor is pyridoxal 5'-phosphate.

The protein localises to the cytoplasm. The catalysed reaction is O-phospho-L-serine + 2-oxoglutarate = 3-phosphooxypyruvate + L-glutamate. It carries out the reaction 4-(phosphooxy)-L-threonine + 2-oxoglutarate = (R)-3-hydroxy-2-oxo-4-phosphooxybutanoate + L-glutamate. Its pathway is amino-acid biosynthesis; L-serine biosynthesis; L-serine from 3-phospho-D-glycerate: step 2/3. It functions in the pathway cofactor biosynthesis; pyridoxine 5'-phosphate biosynthesis; pyridoxine 5'-phosphate from D-erythrose 4-phosphate: step 3/5. Functionally, catalyzes the reversible conversion of 3-phosphohydroxypyruvate to phosphoserine and of 3-hydroxy-2-oxo-4-phosphonooxybutanoate to phosphohydroxythreonine. This Shewanella sp. (strain ANA-3) protein is Phosphoserine aminotransferase.